The chain runs to 182 residues: CASP-like protein 2B1 (182 aa).

Topologically, residues 1 to 12 (MKLIDRRMRLTE) are cytoplasmic. The chain crosses the membrane as a helical span at residues 13–31 (LLLRCSISVFALLALILVV). Residues 32–52 (TDTEVKLIFTIKKTAKYTDMK) lie on the Extracellular side of the membrane. A helical transmembrane segment spans residues 53 to 73 (AVVFLVVANGIAAVYSLLQSV). Topologically, residues 74-89 (RCVVGTMKGRVLFSKP) are cytoplasmic. Residues 90–110 (LAWAFFSGDQAMAYLNVAAIA) form a helical membrane-spanning segment. Residues 111–141 (ATAESGVIAREGEEDLQWMRVCNMYGKFCNQ) lie on the Extracellular side of the membrane. A helical transmembrane segment spans residues 142 to 162 (MAIGVSSALLASIAMVFVSCI). The Cytoplasmic portion of the chain corresponds to 163–182 (SAFSLFRLYGATRDRRTTPW).

This sequence belongs to the Casparian strip membrane proteins (CASP) family. As to quaternary structure, homodimer and heterodimers.

It is found in the cell membrane. The sequence is that of CASP-like protein 2B1 from Arabidopsis lyrata subsp. lyrata (Lyre-leaved rock-cress).